A 625-amino-acid polypeptide reads, in one-letter code: Replication protein E1 (625 aa).

Positions 83–85 match the Nuclear localization signal motif; the sequence is KRK. Phosphoserine; by host occurs at positions 89, 93, and 107. A Nuclear export signal motif is present at residues 106 to 115; it reads LSPRLNEISL. Residues 147–169 form a disordered region; the sequence is GGGGQDVQAGGKENTRPDDGGGD. A DNA-binding region region spans residues 162–328; the sequence is RPDDGGGDAT…QTMFQHGLED (167 aa). The SF3 helicase domain maps to 427-577; sequence VEFIAFLAAL…FPFDQNGNPV (151 aa). 453 to 460 is a binding site for ATP; the sequence is GPPNTGKS. Residue K534 forms a Glycyl lysine isopeptide (Lys-Gly) (interchain with G-Cter in SUMO) linkage.

Belongs to the papillomaviridae E1 protein family. Can form hexamers. Interacts with E2 protein; this interaction increases E1 DNA binding specificity. Interacts with host DNA polymerase subunit POLA2. Interacts with host single stranded DNA-binding protein RPA1. Interacts with host TOP1; this interaction stimulates the enzymatic activity of TOP1. Post-translationally, phosphorylated. In terms of processing, sumoylated.

The protein localises to the host nucleus. It carries out the reaction Couples ATP hydrolysis with the unwinding of duplex DNA by translocating in the 3'-5' direction.. The enzyme catalyses ATP + H2O = ADP + phosphate + H(+). In terms of biological role, ATP-dependent DNA 3'-5' helicase required for initiation of viral DNA replication. It forms a complex with the viral E2 protein. The E1-E2 complex binds to the replication origin which contains binding sites for both proteins. During the initial step, a dimer of E1 interacts with a dimer of protein E2 leading to a complex that binds the viral origin of replication with high specificity. Then, a second dimer of E1 displaces the E2 dimer in an ATP-dependent manner to form the E1 tetramer. Following this, two E1 monomers are added to each half of the site, which results in the formation of two E1 trimers on the viral ori. Subsequently, two hexamers will be created. The double hexamer acts as a bi-directional helicase machinery and unwinds the viral DNA and then recruits the host DNA polymerase to start replication. The protein is Replication protein E1 of Macaca mulatta (Rhesus macaque).